The following is a 100-amino-acid chain: Urease subunit gamma (100 aa).

It belongs to the urease gamma subunit family. In terms of assembly, heterotrimer of UreA (gamma), UreB (beta) and UreC (alpha) subunits. Three heterotrimers associate to form the active enzyme.

It is found in the cytoplasm. It catalyses the reaction urea + 2 H2O + H(+) = hydrogencarbonate + 2 NH4(+). The protein operates within nitrogen metabolism; urea degradation; CO(2) and NH(3) from urea (urease route): step 1/1. This Nostoc punctiforme (strain ATCC 29133 / PCC 73102) protein is Urease subunit gamma.